Here is a 284-residue protein sequence, read N- to C-terminus: 2-dehydro-3-deoxyphosphooctonate aldolase (284 aa).

It belongs to the KdsA family.

The protein resides in the cytoplasm. It carries out the reaction D-arabinose 5-phosphate + phosphoenolpyruvate + H2O = 3-deoxy-alpha-D-manno-2-octulosonate-8-phosphate + phosphate. It participates in carbohydrate biosynthesis; 3-deoxy-D-manno-octulosonate biosynthesis; 3-deoxy-D-manno-octulosonate from D-ribulose 5-phosphate: step 2/3. The protein operates within bacterial outer membrane biogenesis; lipopolysaccharide biosynthesis. This is 2-dehydro-3-deoxyphosphooctonate aldolase from Paraburkholderia phymatum (strain DSM 17167 / CIP 108236 / LMG 21445 / STM815) (Burkholderia phymatum).